The primary structure comprises 148 residues: Calmodulin-4 (148 aa).

EF-hand domains are found at residues 8–43 (EEVA…LGKN), 44–79 (LPEK…YKKG), 80–115 (HRAG…LGES), and 116–148 (LSQE…HVEN). Residues aspartate 21, asparagine 23, aspartate 25, histidine 27, glutamate 32, aspartate 57, aspartate 59, aspartate 61, lysine 63, glutamate 68, aspartate 93, asparagine 95, aspartate 97, tyrosine 99, and glutamate 104 each coordinate Ca(2+).

Implicated in the early stage of ectopic ossification. The chain is Calmodulin-4 (Calm4) from Mus musculus (Mouse).